A 233-amino-acid chain; its full sequence is Biosynthetic peptidoglycan transglycosylase (233 aa).

Residues 7–27 (VFTWLAKLVLGLFFASILSVV) form a helical membrane-spanning segment.

The protein belongs to the glycosyltransferase 51 family.

It localises to the cell inner membrane. It catalyses the reaction [GlcNAc-(1-&gt;4)-Mur2Ac(oyl-L-Ala-gamma-D-Glu-L-Lys-D-Ala-D-Ala)](n)-di-trans,octa-cis-undecaprenyl diphosphate + beta-D-GlcNAc-(1-&gt;4)-Mur2Ac(oyl-L-Ala-gamma-D-Glu-L-Lys-D-Ala-D-Ala)-di-trans,octa-cis-undecaprenyl diphosphate = [GlcNAc-(1-&gt;4)-Mur2Ac(oyl-L-Ala-gamma-D-Glu-L-Lys-D-Ala-D-Ala)](n+1)-di-trans,octa-cis-undecaprenyl diphosphate + di-trans,octa-cis-undecaprenyl diphosphate + H(+). It functions in the pathway cell wall biogenesis; peptidoglycan biosynthesis. Functionally, peptidoglycan polymerase that catalyzes glycan chain elongation from lipid-linked precursors. This is Biosynthetic peptidoglycan transglycosylase from Shewanella oneidensis (strain ATCC 700550 / JCM 31522 / CIP 106686 / LMG 19005 / NCIMB 14063 / MR-1).